The sequence spans 518 residues: Glucose-1-phosphate adenylyltransferase large subunit 2, cytosolic (518 aa).

It belongs to the bacterial/plant glucose-1-phosphate adenylyltransferase family. In terms of assembly, heterotetramer composed of two small and two large subunits.

The protein localises to the cytoplasm. It is found in the cytosol. It carries out the reaction alpha-D-glucose 1-phosphate + ATP + H(+) = ADP-alpha-D-glucose + diphosphate. Its pathway is glycan biosynthesis; starch biosynthesis. Its activity is regulated as follows. Activated by 3'phosphoglycerate, inhibited by orthophosphate. Allosteric regulation. Inhibited by inorganic phosphate (Pi). Involved in synthesis of starch. Catalyzes the synthesis of ADP-glucose, a molecule that serves as an activated glycosyl donor for alpha-1,4-glucan synthesis. Essential for starch synthesis in seed endosperm. Is essential for both catalytic and allosteric regulatory properties of the cytosolic heterotetramer enzyme. In Oryza sativa subsp. japonica (Rice), this protein is Glucose-1-phosphate adenylyltransferase large subunit 2, cytosolic.